Reading from the N-terminus, the 281-residue chain is 4-diphosphocytidyl-2-C-methyl-D-erythritol kinase (281 aa).

Lys11 is an active-site residue. 92 to 102 serves as a coordination point for ATP; sequence LVSAGLAGGSA. Asp132 is a catalytic residue.

This sequence belongs to the GHMP kinase family. IspE subfamily.

The catalysed reaction is 4-CDP-2-C-methyl-D-erythritol + ATP = 4-CDP-2-C-methyl-D-erythritol 2-phosphate + ADP + H(+). Its pathway is isoprenoid biosynthesis; isopentenyl diphosphate biosynthesis via DXP pathway; isopentenyl diphosphate from 1-deoxy-D-xylulose 5-phosphate: step 3/6. Its function is as follows. Catalyzes the phosphorylation of the position 2 hydroxy group of 4-diphosphocytidyl-2C-methyl-D-erythritol. This Ehrlichia ruminantium (strain Gardel) protein is 4-diphosphocytidyl-2-C-methyl-D-erythritol kinase.